Here is a 243-residue protein sequence, read N- to C-terminus: Carboxy-S-adenosyl-L-methionine synthase (243 aa).

Residues Tyr-35, 68-70 (GCS), 92-93 (DN), and Arg-199 each bind S-adenosyl-L-methionine.

The protein belongs to the class I-like SAM-binding methyltransferase superfamily. Cx-SAM synthase family. In terms of assembly, homodimer.

It carries out the reaction prephenate + S-adenosyl-L-methionine = carboxy-S-adenosyl-L-methionine + 3-phenylpyruvate + H2O. Its function is as follows. Catalyzes the conversion of S-adenosyl-L-methionine (SAM) to carboxy-S-adenosyl-L-methionine (Cx-SAM). The polypeptide is Carboxy-S-adenosyl-L-methionine synthase (Helicobacter pylori (strain ATCC 700392 / 26695) (Campylobacter pylori)).